A 538-amino-acid chain; its full sequence is Nicotinate phosphoribosyltransferase (538 aa).

Residues Tyr-21 and Thr-210 each coordinate nicotinate. His-213 is subject to Phosphohistidine. Arg-318 lines the nicotinate pocket. Residue Thr-380 coordinates 5-phospho-alpha-D-ribose 1-diphosphate.

This sequence belongs to the NAPRTase family. In terms of assembly, homodimer. The cofactor is Mg(2+). Mn(2+) serves as cofactor. Post-translationally, transiently phosphorylated on a His residue during the reaction cycle. Phosphorylation strongly increases the affinity for substrates and increases the rate of nicotinate D-ribonucleotide production. Dephosphorylation regenerates the low-affinity form of the enzyme, leading to product release.

The protein resides in the cytoplasm. The protein localises to the cytosol. It catalyses the reaction nicotinate + 5-phospho-alpha-D-ribose 1-diphosphate + ATP + H2O = nicotinate beta-D-ribonucleotide + ADP + phosphate + diphosphate. It functions in the pathway cofactor biosynthesis; NAD(+) biosynthesis; nicotinate D-ribonucleotide from nicotinate: step 1/1. Functionally, catalyzes the first step in the biosynthesis of NAD from nicotinic acid, the ATP-dependent synthesis of beta-nicotinate D-ribonucleotide from nicotinate and 5-phospho-D-ribose 1-phosphate. Helps prevent cellular oxidative stress via its role in NAD biosynthesis. The sequence is that of Nicotinate phosphoribosyltransferase (NAPRT) from Bos taurus (Bovine).